Consider the following 592-residue polypeptide: Proteasome-associated ATPase (592 aa).

Acidic residues predominate over residues 1 to 11; that stretch reads MTGYDSSEEAE. Residues 1–24 are disordered; it reads MTGYDSSEEAERDSSPADGYRQTP. Residues 25–99 adopt a coiled-coil conformation; it reads AQLSAQIRVL…LKEEVDRLAQ (75 aa). Residue 281 to 286 participates in ATP binding; the sequence is GCGKTL. Positions 591-592 are docks into pockets in the proteasome alpha-ring; that stretch reads YL.

Belongs to the AAA ATPase family. As to quaternary structure, homohexamer. Assembles into a hexameric ring structure that caps the 20S proteasome core. Strongly interacts with the prokaryotic ubiquitin-like protein Pup through a hydrophobic interface; the interacting region of ARC lies in its N-terminal coiled-coil domain. There is one Pup binding site per ARC hexamer ring. Upon ATP-binding, the C-terminus of ARC interacts with the alpha-rings of the proteasome core, possibly by binding to the intersubunit pockets.

The protein operates within protein degradation; proteasomal Pup-dependent pathway. In terms of biological role, ATPase which is responsible for recognizing, binding, unfolding and translocation of pupylated proteins into the bacterial 20S proteasome core particle. May be essential for opening the gate of the 20S proteasome via an interaction with its C-terminus, thereby allowing substrate entry and access to the site of proteolysis. Thus, the C-termini of the proteasomal ATPase may function like a 'key in a lock' to induce gate opening and therefore regulate proteolysis. The protein is Proteasome-associated ATPase of Nakamurella multipartita (strain ATCC 700099 / DSM 44233 / CIP 104796 / JCM 9543 / NBRC 105858 / Y-104) (Microsphaera multipartita).